Consider the following 509-residue polypeptide: Bifunctional purine biosynthesis protein PurH (509 aa).

In terms of domain architecture, MGS-like spans 1–144 (MKRALISVSD…KNYAAVTVVV (144 aa)).

Belongs to the PurH family.

It carries out the reaction (6R)-10-formyltetrahydrofolate + 5-amino-1-(5-phospho-beta-D-ribosyl)imidazole-4-carboxamide = 5-formamido-1-(5-phospho-D-ribosyl)imidazole-4-carboxamide + (6S)-5,6,7,8-tetrahydrofolate. The catalysed reaction is IMP + H2O = 5-formamido-1-(5-phospho-D-ribosyl)imidazole-4-carboxamide. It functions in the pathway purine metabolism; IMP biosynthesis via de novo pathway; 5-formamido-1-(5-phospho-D-ribosyl)imidazole-4-carboxamide from 5-amino-1-(5-phospho-D-ribosyl)imidazole-4-carboxamide (10-formyl THF route): step 1/1. The protein operates within purine metabolism; IMP biosynthesis via de novo pathway; IMP from 5-formamido-1-(5-phospho-D-ribosyl)imidazole-4-carboxamide: step 1/1. This Listeria innocua serovar 6a (strain ATCC BAA-680 / CLIP 11262) protein is Bifunctional purine biosynthesis protein PurH.